A 192-amino-acid polypeptide reads, in one-letter code: Adenylate kinase (192 aa).

10–15 provides a ligand contact to ATP; that stretch reads GSGKGT. An NMP region spans residues 30 to 59; sequence STGDMLREVISRETEVGRKAKAIINAGALV. AMP contacts are provided by residues Thr-31, Arg-36, 57-59, 85-88, and Gln-92; these read ALV and GYPR. An LID region spans residues 126–142; the sequence is KRVQETIAVGGQVRSDD. Arg-127 is a binding site for ATP. The AMP site is built by Arg-139 and Arg-150. Residue Met-178 participates in ATP binding.

The protein belongs to the adenylate kinase family. Monomer.

It is found in the cytoplasm. The catalysed reaction is AMP + ATP = 2 ADP. Its pathway is purine metabolism; AMP biosynthesis via salvage pathway; AMP from ADP: step 1/1. Functionally, catalyzes the reversible transfer of the terminal phosphate group between ATP and AMP. Plays an important role in cellular energy homeostasis and in adenine nucleotide metabolism. The protein is Adenylate kinase of Bartonella quintana (strain Toulouse) (Rochalimaea quintana).